Consider the following 305-residue polypeptide: MVDNLTHLKQLEAESIHIIREVAAEFDNPVMLYSIGKDSAVMLHLARKAFFPGKLPFPVMHVDTQWKFQEMYRFRDKMVEEMGLELITHVNPEGVAQGINPFTHGSSKHTDIMKTQGLKQALDKHGFDAAFGGARRDEEKSRAKERVYSFRDSKHRWDPKNQRPELWNIYNGKVNKGESIRVFPLSNWTELDIWQYIYLEGIPIVPLYFAAEREVIEKNGTLIMIDDERILEHLSDEEKARIVKKKVRFRTLGCYPLTGAVESEAETLTDIIQEMLLTRTSERQGRVIDHDGAGSMEDKKRQGYF.

It belongs to the PAPS reductase family. CysD subfamily. In terms of assembly, heterodimer composed of CysD, the smaller subunit, and CysN.

The enzyme catalyses sulfate + ATP + H(+) = adenosine 5'-phosphosulfate + diphosphate. It functions in the pathway sulfur metabolism; hydrogen sulfide biosynthesis; sulfite from sulfate: step 1/3. With CysN forms the ATP sulfurylase (ATPS) that catalyzes the adenylation of sulfate producing adenosine 5'-phosphosulfate (APS) and diphosphate, the first enzymatic step in sulfur assimilation pathway. APS synthesis involves the formation of a high-energy phosphoric-sulfuric acid anhydride bond driven by GTP hydrolysis by CysN coupled to ATP hydrolysis by CysD. The polypeptide is Sulfate adenylyltransferase subunit 2 (Pseudomonas entomophila (strain L48)).